A 248-amino-acid polypeptide reads, in one-letter code: Ubiquinone biosynthesis O-methyltransferase (248 aa).

R41, G72, D93, and M136 together coordinate S-adenosyl-L-methionine.

Belongs to the methyltransferase superfamily. UbiG/COQ3 family.

It carries out the reaction a 3-demethylubiquinol + S-adenosyl-L-methionine = a ubiquinol + S-adenosyl-L-homocysteine + H(+). The catalysed reaction is a 3-(all-trans-polyprenyl)benzene-1,2-diol + S-adenosyl-L-methionine = a 2-methoxy-6-(all-trans-polyprenyl)phenol + S-adenosyl-L-homocysteine + H(+). Its pathway is cofactor biosynthesis; ubiquinone biosynthesis. Its function is as follows. O-methyltransferase that catalyzes the 2 O-methylation steps in the ubiquinone biosynthetic pathway. The protein is Ubiquinone biosynthesis O-methyltransferase of Rhizobium rhizogenes (strain K84 / ATCC BAA-868) (Agrobacterium radiobacter).